The chain runs to 239 residues: Ribose-5-phosphate isomerase A (239 aa).

Substrate-binding positions include 34-37, 94-97, and 107-110; these read TGST, DGAD, and KGGG. Glu116 (proton acceptor) is an active-site residue. Lys134 serves as a coordination point for substrate.

The protein belongs to the ribose 5-phosphate isomerase family. As to quaternary structure, homodimer.

It catalyses the reaction aldehydo-D-ribose 5-phosphate = D-ribulose 5-phosphate. Its pathway is carbohydrate degradation; pentose phosphate pathway; D-ribose 5-phosphate from D-ribulose 5-phosphate (non-oxidative stage): step 1/1. Catalyzes the reversible conversion of ribose-5-phosphate to ribulose 5-phosphate. In Treponema denticola (strain ATCC 35405 / DSM 14222 / CIP 103919 / JCM 8153 / KCTC 15104), this protein is Ribose-5-phosphate isomerase A.